Here is a 398-residue protein sequence, read N- to C-terminus: uncharacterized protein (398 aa).

The tract at residues 313–398 (KTIKSSGSKT…TSKSIKYYEV (86 aa)) is disordered. 2 stretches are compositionally biased toward low complexity: residues 314-333 (TIKSSGSKTSKSIGSKTNKS) and 343-398 (GSKT…YYEV).

This is an uncharacterized protein from Acanthamoeba polyphaga mimivirus (APMV).